We begin with the raw amino-acid sequence, 323 residues long: tRNA dimethylallyltransferase (323 aa).

An ATP-binding site is contributed by 12–19 (GPTAAGKT). Substrate is bound at residue 14–19 (TAAGKT). 2 interaction with substrate tRNA regions span residues 37-40 (DSAL) and 161-165 (QRLIR).

Belongs to the IPP transferase family. Monomer. It depends on Mg(2+) as a cofactor.

It carries out the reaction adenosine(37) in tRNA + dimethylallyl diphosphate = N(6)-dimethylallyladenosine(37) in tRNA + diphosphate. Functionally, catalyzes the transfer of a dimethylallyl group onto the adenine at position 37 in tRNAs that read codons beginning with uridine, leading to the formation of N6-(dimethylallyl)adenosine (i(6)A). This Pseudomonas entomophila (strain L48) protein is tRNA dimethylallyltransferase.